A 442-amino-acid polypeptide reads, in one-letter code: Histidine--tRNA ligase (442 aa).

Belongs to the class-II aminoacyl-tRNA synthetase family. As to quaternary structure, homodimer.

The protein resides in the cytoplasm. The enzyme catalyses tRNA(His) + L-histidine + ATP = L-histidyl-tRNA(His) + AMP + diphosphate + H(+). This Helicobacter pylori (strain J99 / ATCC 700824) (Campylobacter pylori J99) protein is Histidine--tRNA ligase (hisS).